Consider the following 481-residue polypeptide: 6-phosphogluconate dehydrogenase, decarboxylating (481 aa).

Residues 11–16 (GLAVMG), 34–36 (NRT), 76–78 (VKG), and asparagine 104 contribute to the NADP(+) site. Residues asparagine 104 and 130–132 (SGG) each bind substrate. Lysine 184 (proton acceptor) is an active-site residue. 187–188 (HN) contacts substrate. Catalysis depends on glutamate 191, which acts as the Proton donor. Residues tyrosine 192, lysine 259, arginine 286, arginine 445, and histidine 451 each contribute to the substrate site.

It belongs to the 6-phosphogluconate dehydrogenase family. As to quaternary structure, homodimer.

It carries out the reaction 6-phospho-D-gluconate + NADP(+) = D-ribulose 5-phosphate + CO2 + NADPH. The protein operates within carbohydrate degradation; pentose phosphate pathway; D-ribulose 5-phosphate from D-glucose 6-phosphate (oxidative stage): step 3/3. Its function is as follows. Catalyzes the oxidative decarboxylation of 6-phosphogluconate to ribulose 5-phosphate and CO(2), with concomitant reduction of NADP to NADPH. The protein is 6-phosphogluconate dehydrogenase, decarboxylating (Pgd) of Drosophila simulans (Fruit fly).